Reading from the N-terminus, the 231-residue chain is Probable septum site-determining protein MinC (231 aa).

Residues 100–125 (EGKEKSPRPAPAPQAPAQNTTPVTKT) are disordered.

Belongs to the MinC family. As to quaternary structure, interacts with MinD and FtsZ.

In terms of biological role, cell division inhibitor that blocks the formation of polar Z ring septums. Rapidly oscillates between the poles of the cell to destabilize FtsZ filaments that have formed before they mature into polar Z rings. Prevents FtsZ polymerization. In Escherichia coli O81 (strain ED1a), this protein is Probable septum site-determining protein MinC.